Consider the following 364-residue polypeptide: Aminomethyltransferase (364 aa).

The protein belongs to the GcvT family. The glycine cleavage system is composed of four proteins: P, T, L and H.

The catalysed reaction is N(6)-[(R)-S(8)-aminomethyldihydrolipoyl]-L-lysyl-[protein] + (6S)-5,6,7,8-tetrahydrofolate = N(6)-[(R)-dihydrolipoyl]-L-lysyl-[protein] + (6R)-5,10-methylene-5,6,7,8-tetrahydrofolate + NH4(+). In terms of biological role, the glycine cleavage system catalyzes the degradation of glycine. In Bacillus licheniformis (strain ATCC 14580 / DSM 13 / JCM 2505 / CCUG 7422 / NBRC 12200 / NCIMB 9375 / NCTC 10341 / NRRL NRS-1264 / Gibson 46), this protein is Aminomethyltransferase.